The primary structure comprises 150 residues: Transcriptional repressor NrdR (150 aa).

A zinc finger spans residues 3–34 (CPFCAFADSKVVDSRPDKEGSTIRRRRECESC). Residues 49–139 (PLVIKKDGRR…VYRSFKDITE (91 aa)) form the ATP-cone domain.

Belongs to the NrdR family. It depends on Zn(2+) as a cofactor.

Functionally, negatively regulates transcription of bacterial ribonucleotide reductase nrd genes and operons by binding to NrdR-boxes. The protein is Transcriptional repressor NrdR of Geotalea daltonii (strain DSM 22248 / JCM 15807 / FRC-32) (Geobacter daltonii).